A 400-amino-acid chain; its full sequence is Phosphoglycerate kinase (400 aa).

Substrate-binding positions include D20–N22, R35, H58–R61, R115, and R155. ATP-binding positions include E330 and G356–T359.

It belongs to the phosphoglycerate kinase family. In terms of assembly, monomer.

It is found in the cytoplasm. It catalyses the reaction (2R)-3-phosphoglycerate + ATP = (2R)-3-phospho-glyceroyl phosphate + ADP. The protein operates within carbohydrate degradation; glycolysis; pyruvate from D-glyceraldehyde 3-phosphate: step 2/5. The polypeptide is Phosphoglycerate kinase (Haloarcula marismortui (strain ATCC 43049 / DSM 3752 / JCM 8966 / VKM B-1809) (Halobacterium marismortui)).